Here is a 257-residue protein sequence, read N- to C-terminus: Acetylglutamate kinase (257 aa).

Residues 43–44 (GG), Arg65, and Asn157 contribute to the substrate site. Residues 180 to 185 (DISSIL) and 208 to 210 (IIT) contribute to the ATP site.

It belongs to the acetylglutamate kinase family. ArgB subfamily. Homodimer.

It localises to the cytoplasm. The catalysed reaction is N-acetyl-L-glutamate + ATP = N-acetyl-L-glutamyl 5-phosphate + ADP. It functions in the pathway amino-acid biosynthesis; L-arginine biosynthesis; N(2)-acetyl-L-ornithine from L-glutamate: step 2/4. Catalyzes the ATP-dependent phosphorylation of N-acetyl-L-glutamate. The chain is Acetylglutamate kinase from Buchnera aphidicola subsp. Acyrthosiphon pisum (strain 5A).